A 436-amino-acid chain; its full sequence is UPF0597 protein YhaM (436 aa).

This sequence belongs to the UPF0597 family.

The sequence is that of UPF0597 protein YhaM from Salmonella paratyphi A (strain ATCC 9150 / SARB42).